We begin with the raw amino-acid sequence, 375 residues long: Arsenite methyltransferase (375 aa).

The residue at position 335 (Ser335) is a Phosphoserine.

Belongs to the methyltransferase superfamily. Arsenite methyltransferase family.

It localises to the cytoplasm. Its subcellular location is the cytosol. The catalysed reaction is arsenic triglutathione + [thioredoxin]-dithiol + S-adenosyl-L-methionine + 2 H2O = methylarsonous acid + [thioredoxin]-disulfide + 3 glutathione + S-adenosyl-L-homocysteine + H(+). It catalyses the reaction arsenic triglutathione + 2 [thioredoxin]-dithiol + 2 S-adenosyl-L-methionine + H2O = dimethylarsinous acid + 2 [thioredoxin]-disulfide + 3 glutathione + 2 S-adenosyl-L-homocysteine + 2 H(+). It carries out the reaction arsenic triglutathione + 3 [thioredoxin]-dithiol + 3 S-adenosyl-L-methionine = trimethylarsine + 3 [thioredoxin]-disulfide + 3 glutathione + 3 S-adenosyl-L-homocysteine + 3 H(+). Functionally, catalyzes the transfer of a methyl group from AdoMet to trivalent arsenicals producing methylated and dimethylated arsenicals. It methylates arsenite to form methylarsonate, Me-AsO(3)H(2), which is reduced by methylarsonate reductase to methylarsonite, Me-As(OH)2. Methylarsonite is also a substrate and it is converted into the much less toxic compound dimethylarsinate (cacodylate), Me(2)As(O)-OH. This chain is Arsenite methyltransferase (AS3MT), found in Homo sapiens (Human).